The primary structure comprises 443 residues: ATP-dependent protease ATPase subunit HslU (443 aa).

ATP is bound by residues I18, 60 to 65, D256, E321, and R393; that span reads GVGKTE.

The protein belongs to the ClpX chaperone family. HslU subfamily. As to quaternary structure, a double ring-shaped homohexamer of HslV is capped on each side by a ring-shaped HslU homohexamer. The assembly of the HslU/HslV complex is dependent on binding of ATP.

Its subcellular location is the cytoplasm. In terms of biological role, ATPase subunit of a proteasome-like degradation complex; this subunit has chaperone activity. The binding of ATP and its subsequent hydrolysis by HslU are essential for unfolding of protein substrates subsequently hydrolyzed by HslV. HslU recognizes the N-terminal part of its protein substrates and unfolds these before they are guided to HslV for hydrolysis. This is ATP-dependent protease ATPase subunit HslU from Buchnera aphidicola subsp. Schizaphis graminum (strain Sg).